The sequence spans 251 residues: MDDSSSLASPVQSILAAARRRDPPTRRCTVSARSLPAALHSAAADGRTPIIAEVKPTSPTTDTEHSGDPAELAREMVAGGAAAVSVLTEPHHFDGSTDALRAIRDAVDVPVLRKDFLLTEPQLDAVAADAVLLIARFLGDDLGDMLAAARDRGFQALVEVHSPRELARAVDADADIIGVNNRDLTALTVDLDTFGAVAPEAPADVTLVAESGIATPTDARTMRAAGADGLLVGSAIMDGPVRDTTRRLVTA.

A compositionally biased stretch (polar residues) spans 1–12; sequence MDDSSSLASPVQ. The segment at 1 to 27 is disordered; the sequence is MDDSSSLASPVQSILAAARRRDPPTRR.

Belongs to the TrpC family.

The enzyme catalyses 1-(2-carboxyphenylamino)-1-deoxy-D-ribulose 5-phosphate + H(+) = (1S,2R)-1-C-(indol-3-yl)glycerol 3-phosphate + CO2 + H2O. Its pathway is amino-acid biosynthesis; L-tryptophan biosynthesis; L-tryptophan from chorismate: step 4/5. The sequence is that of Indole-3-glycerol phosphate synthase from Halobacterium salinarum (strain ATCC 700922 / JCM 11081 / NRC-1) (Halobacterium halobium).